Consider the following 531-residue polypeptide: Chaperonin GroEL 2 (531 aa).

Residues 30–33 (TLGP), 87–91 (DGTTT), Gly-414, and Asp-494 contribute to the ATP site.

Belongs to the chaperonin (HSP60) family. In terms of assembly, forms a cylinder of 14 subunits composed of two heptameric rings stacked back-to-back. Interacts with the co-chaperonin GroES.

Its subcellular location is the cytoplasm. It carries out the reaction ATP + H2O + a folded polypeptide = ADP + phosphate + an unfolded polypeptide.. Together with its co-chaperonin GroES, plays an essential role in assisting protein folding. The GroEL-GroES system forms a nano-cage that allows encapsulation of the non-native substrate proteins and provides a physical environment optimized to promote and accelerate protein folding. In Cutibacterium acnes (strain DSM 16379 / KPA171202) (Propionibacterium acnes), this protein is Chaperonin GroEL 2.